The primary structure comprises 71 residues: Large ribosomal subunit protein uL30 (71 aa).

Belongs to the universal ribosomal protein uL30 family. Part of the 50S ribosomal subunit.

In Borreliella burgdorferi (strain ATCC 35210 / DSM 4680 / CIP 102532 / B31) (Borrelia burgdorferi), this protein is Large ribosomal subunit protein uL30.